The following is a 446-amino-acid chain: Tol-Pal system protein TolB (446 aa).

An N-terminal signal peptide occupies residues 1–36; the sequence is MMDVQTVRRGNAVQSLMSKLILPLVMAVAFALPARA. The disordered stretch occupies residues 424–446; the sequence is GYNERPSPTPTFASDPAWSPRIQ.

It belongs to the TolB family. In terms of assembly, the Tol-Pal system is composed of five core proteins: the inner membrane proteins TolA, TolQ and TolR, the periplasmic protein TolB and the outer membrane protein Pal. They form a network linking the inner and outer membranes and the peptidoglycan layer.

It localises to the periplasm. In terms of biological role, part of the Tol-Pal system, which plays a role in outer membrane invagination during cell division and is important for maintaining outer membrane integrity. The protein is Tol-Pal system protein TolB of Parvibaculum lavamentivorans (strain DS-1 / DSM 13023 / NCIMB 13966).